The chain runs to 95 residues: Aspartyl/glutamyl-tRNA(Asn/Gln) amidotransferase subunit C (95 aa).

This sequence belongs to the GatC family. As to quaternary structure, heterotrimer of A, B and C subunits.

The catalysed reaction is L-glutamyl-tRNA(Gln) + L-glutamine + ATP + H2O = L-glutaminyl-tRNA(Gln) + L-glutamate + ADP + phosphate + H(+). It carries out the reaction L-aspartyl-tRNA(Asn) + L-glutamine + ATP + H2O = L-asparaginyl-tRNA(Asn) + L-glutamate + ADP + phosphate + 2 H(+). Functionally, allows the formation of correctly charged Asn-tRNA(Asn) or Gln-tRNA(Gln) through the transamidation of misacylated Asp-tRNA(Asn) or Glu-tRNA(Gln) in organisms which lack either or both of asparaginyl-tRNA or glutaminyl-tRNA synthetases. The reaction takes place in the presence of glutamine and ATP through an activated phospho-Asp-tRNA(Asn) or phospho-Glu-tRNA(Gln). In Geotalea daltonii (strain DSM 22248 / JCM 15807 / FRC-32) (Geobacter daltonii), this protein is Aspartyl/glutamyl-tRNA(Asn/Gln) amidotransferase subunit C.